A 369-amino-acid polypeptide reads, in one-letter code: Queuine tRNA-ribosyltransferase (369 aa).

The active-site Proton acceptor is Asp90. Residues 90–94 (DSGGF), Asp144, Gln186, and Gly213 contribute to the substrate site. The segment at 244–250 (GVGKPAD) is RNA binding. Asp263 acts as the Nucleophile in catalysis. Residues Cys301, Cys303, Cys306, and His332 each contribute to the Zn(2+) site.

The protein belongs to the queuine tRNA-ribosyltransferase family. In terms of assembly, homodimer. Within each dimer, one monomer is responsible for RNA recognition and catalysis, while the other monomer binds to the replacement base PreQ1. It depends on Zn(2+) as a cofactor.

It catalyses the reaction 7-aminomethyl-7-carbaguanine + guanosine(34) in tRNA = 7-aminomethyl-7-carbaguanosine(34) in tRNA + guanine. Its pathway is tRNA modification; tRNA-queuosine biosynthesis. In terms of biological role, catalyzes the base-exchange of a guanine (G) residue with the queuine precursor 7-aminomethyl-7-deazaguanine (PreQ1) at position 34 (anticodon wobble position) in tRNAs with GU(N) anticodons (tRNA-Asp, -Asn, -His and -Tyr). Catalysis occurs through a double-displacement mechanism. The nucleophile active site attacks the C1' of nucleotide 34 to detach the guanine base from the RNA, forming a covalent enzyme-RNA intermediate. The proton acceptor active site deprotonates the incoming PreQ1, allowing a nucleophilic attack on the C1' of the ribose to form the product. After dissociation, two additional enzymatic reactions on the tRNA convert PreQ1 to queuine (Q), resulting in the hypermodified nucleoside queuosine (7-(((4,5-cis-dihydroxy-2-cyclopenten-1-yl)amino)methyl)-7-deazaguanosine). This Dichelobacter nodosus (strain VCS1703A) protein is Queuine tRNA-ribosyltransferase.